The chain runs to 316 residues: Haloacid dehalogenase-like hydrolase domain-containing protein At4g39970 (316 aa).

The transit peptide at 1 to 46 directs the protein to the chloroplast; it reads MAVSCNHSAILFSPSSTAGSSSVTSSSSLIGFPRFQTLRFKSRSVY. The active-site Nucleophile is D69. D69, D71, and D259 together coordinate Mg(2+). D71 (proton donor) is an active-site residue.

This sequence belongs to the HAD-like hydrolase superfamily. DOG/GPP family. Mg(2+) is required as a cofactor.

It is found in the plastid. It localises to the chloroplast. In Arabidopsis thaliana (Mouse-ear cress), this protein is Haloacid dehalogenase-like hydrolase domain-containing protein At4g39970.